A 419-amino-acid chain; its full sequence is Creatine kinase S-type, mitochondrial (419 aa).

Residues 1–39 (MASTFSKLLTGRNASLLFATLGTGALTTGYLLNKQNVCA) constitute a mitochondrion transit peptide. The segment at 40 to 64 (AAREQHKLFPPSADYPDLRKHNNCM) is cardiolipin-binding. The Phosphagen kinase N-terminal domain occupies 46 to 132 (KLFPPSADYP…FDPVIKLRHN (87 aa)). Residues 159 to 401 (YVLSSRVRTG…NYLVDCEKKL (243 aa)) enclose the Phosphagen kinase C-terminal domain. Residues 162-166 (SSRVR) and histidine 225 contribute to the ATP site. Tyrosine 255 is subject to Phosphotyrosine. Residues arginine 270, arginine 326, 354 to 359 (RGTGGV), and aspartate 369 contribute to the ATP site. Phosphothreonine is present on threonine 356.

This sequence belongs to the ATP:guanido phosphotransferase family. Exists as an octamer composed of four CKMT2 homodimers.

It is found in the mitochondrion inner membrane. It carries out the reaction creatine + ATP = N-phosphocreatine + ADP + H(+). Functionally, reversibly catalyzes the transfer of phosphate between ATP and various phosphogens (e.g. creatine phosphate). Creatine kinase isoenzymes play a central role in energy transduction in tissues with large, fluctuating energy demands, such as skeletal muscle, heart, brain and spermatozoa. The sequence is that of Creatine kinase S-type, mitochondrial (CKMT2) from Bos taurus (Bovine).